The sequence spans 1358 residues: DNA-directed RNA polymerase subunit beta (1358 aa).

Belongs to the RNA polymerase beta chain family. The RNAP catalytic core consists of 2 alpha, 1 beta, 1 beta' and 1 omega subunit. When a sigma factor is associated with the core the holoenzyme is formed, which can initiate transcription.

It catalyses the reaction RNA(n) + a ribonucleoside 5'-triphosphate = RNA(n+1) + diphosphate. Functionally, DNA-dependent RNA polymerase catalyzes the transcription of DNA into RNA using the four ribonucleoside triphosphates as substrates. This chain is DNA-directed RNA polymerase subunit beta, found in Francisella tularensis subsp. holarctica (strain OSU18).